Consider the following 180-residue polypeptide: Negative modulator of initiation of replication (180 aa).

3 interaction with DNA regions span residues 86-87 (AV), 115-119 (RTRVY), and 149-155 (NTNTGRK).

Belongs to the SeqA family. Homodimer. Polymerizes to form helical filaments.

The protein resides in the cytoplasm. Negative regulator of replication initiation, which contributes to regulation of DNA replication and ensures that replication initiation occurs exactly once per chromosome per cell cycle. Binds to pairs of hemimethylated GATC sequences in the oriC region, thus preventing assembly of replication proteins and re-initiation at newly replicated origins. Repression is relieved when the region becomes fully methylated. This Salmonella typhimurium (strain LT2 / SGSC1412 / ATCC 700720) protein is Negative modulator of initiation of replication.